We begin with the raw amino-acid sequence, 2623 residues long: Probable polyketide synthase 31 (2623 aa).

Residues 1-11 (MTQNIDNNNNK) are compositionally biased toward low complexity. Residues 1 to 25 (MTQNIDNNNNKLIRDRNDDDDVDRN) form a disordered region. Residues 27–461 (DGDVAVIGIG…GSNVCLILSE (435 aa)) form the Ketosynthase family 3 (KS3) domain. Residues Cys199, His338, and His384 each act as for beta-ketoacyl synthase activity in the active site. An acyl/malonyl transferase region spans residues 666 to 699 (GVSADIIIGHSLGEVSSPYCSGMIDFQTLCYLIY). Catalysis depends on Ser676, which acts as the For acyl/malonyl transferase activity. The tract at residues 959-1088 (HEKIKSEGPS…GNFNLTKHNS (130 aa)) is N-terminal hotdog fold. The PKS/mFAS DH domain maps to 959–1267 (HEKIKSEGPS…CALVSLGSNP (309 aa)). His1000 (proton acceptor; for dehydratase activity) is an active-site residue. Residues 1105–1267 (NFTSISKQDF…CALVSLGSNP (163 aa)) are C-terminal hotdog fold. The Proton donor; for dehydratase activity role is filled by Asp1177. The Carrier domain maps to 2524–2601 (ANNEIIHSTI…QSIEIIKSAK (78 aa)). Ser2561 bears the O-(pantetheine 4'-phosphoryl)serine mark. Residues 2600–2623 (AKNNNKNNNNNNNKNNSNNKNKNN) form a disordered region. Residues 2601–2623 (KNNNKNNNNNNNKNNSNNKNKNN) are compositionally biased toward low complexity.

The cofactor is pantetheine 4'-phosphate.

In terms of biological role, probable polyketide synthase. The sequence is that of Probable polyketide synthase 31 (pks31) from Dictyostelium discoideum (Social amoeba).